Consider the following 507-residue polypeptide: 25-hydroxyvitamin D-1 alpha hydroxylase, mitochondrial (507 aa).

C454 is a heme binding site.

The protein belongs to the cytochrome P450 family. It depends on heme as a cofactor. Kidney.

Its subcellular location is the mitochondrion membrane. The enzyme catalyses calcidiol + 2 reduced [adrenodoxin] + O2 + 2 H(+) = calcitriol + 2 oxidized [adrenodoxin] + H2O. It carries out the reaction secalciferol + 2 reduced [adrenodoxin] + O2 + 2 H(+) = calcitetrol + 2 oxidized [adrenodoxin] + H2O. The catalysed reaction is 25-hydroxy-24-oxocalciol + 2 reduced [adrenodoxin] + O2 + 2 H(+) = (1S)-1,25-dihydroxy-24-oxocalciol + 2 oxidized [adrenodoxin] + H2O. It catalyses the reaction 25-hydroxyvitamin D2 + 2 reduced [adrenodoxin] + O2 + 2 H(+) = 1alpha,25-dihydroxyvitamin D2 + 2 oxidized [adrenodoxin] + H2O. It functions in the pathway hormone biosynthesis; vitamin D biosynthesis. With respect to regulation, activated by cardiolipin and dioleoyl phosphatidylethanolamine (DOPE), phospholipids found in the inner mitochondrial membrane. Inhibited by high substrate concentration. A cytochrome P450 monooxygenase involved in vitamin D metabolism and in calcium and phosphorus homeostasis. Catalyzes the rate-limiting step in the activation of vitamin D in the kidney, namely the hydroxylation of 25-hydroxyvitamin D3/calcidiol at the C1-alpha position to form the hormonally active form of vitamin D3, 1alpha,25-dihydroxyvitamin D3/calcitriol that acts via the vitamin D receptor (VDR). Has 1-alpha-hydroxylase activity on vitamin D intermediates of the CYP24A1-mediated inactivation pathway. Converts 24R,25-dihydroxyvitamin D3/secalciferol to 1-alpha,24,25-trihydroxyvitamin D3, an active ligand of VDR. Also active on 25-hydroxyvitamin D2. Mechanistically, uses molecular oxygen inserting one oxygen atom into a substrate, and reducing the second into a water molecule, with two electrons provided by NADPH via FDXR/adrenodoxin reductase and FDX1/adrenodoxin. The chain is 25-hydroxyvitamin D-1 alpha hydroxylase, mitochondrial (Cyp27b1) from Mus musculus (Mouse).